The following is an 802-amino-acid chain: Chondroitin sulfate synthase 1 (802 aa).

Topologically, residues 1–7 (MAARGRR) are cytoplasmic. The chain crosses the membrane as a helical; Signal-anchor for type II membrane protein span at residues 8 to 28 (AWLSVLLGLVLGFVLASRLVL). The Lumenal segment spans residues 29 to 802 (PRASELKRAG…SNNNGSVRTA (774 aa)). The disordered stretch occupies residues 34 to 82 (LKRAGPRRRASPEGCRSGQAAASQAGGARGDARGAQLWPPGSDPDGGPR). Low complexity-rich tracts occupy residues 49–59 (RSGQAAASQAG) and 66–78 (RGAQ…SDPD). N-linked (GlcNAc...) asparagine glycosylation is found at N189 and N623. A divalent metal cation contacts are provided by D633 and H747. Residue N796 is glycosylated (N-linked (GlcNAc...) asparagine).

This sequence belongs to the chondroitin N-acetylgalactosaminyltransferase family. Co(2+) is required as a cofactor. It depends on Mn(2+) as a cofactor. Cd(2+) serves as cofactor. Ubiquitous, with the highest levels in placenta. Detected at low levels in brain, heart, skeletal muscle, colon, thymus, spleen, kidney, liver, adrenal gland, mammary gland, stomach, small intestine, lung and peripheral blood leukocytes.

It localises to the golgi apparatus. Its subcellular location is the golgi stack membrane. The protein resides in the secreted. The catalysed reaction is 3-O-(beta-D-GlcA-(1-&gt;3)-beta-D-GalNAc-(1-&gt;4)-beta-D-GlcA-(1-&gt;3)-beta-D-Gal-(1-&gt;3)-beta-D-Gal-(1-&gt;4)-beta-D-Xyl)-L-seryl-[protein] + UDP-N-acetyl-alpha-D-galactosamine = 3-O-(beta-D-GalNAc-(1-&gt;4)-beta-D-GlcA-(1-&gt;3)-beta-D-GalNAc-(1-&gt;4)-beta-D-GlcA-(1-&gt;3)-beta-D-Gal-(1-&gt;3)-beta-D-Gal-(1-&gt;4)-beta-D-Xyl)-L-seryl-[protein] + UDP + H(+). It catalyses the reaction 3-O-{beta-D-GlcA-(1-&gt;3)-[beta-D-GalNAc-(1-&gt;4)-beta-D-GlcA-(1-&gt;3)](n)-beta-D-GalNAc-(1-&gt;4)-beta-D-GlcA-(1-&gt;3)-beta-D-Gal-(1-&gt;3)-beta-D-Gal-(1-&gt;4)-beta-D-Xyl}-L-seryl-[protein] + UDP-N-acetyl-alpha-D-galactosamine = 3-O-{[beta-D-GalNAc-(1-&gt;4)-beta-D-GlcA-(1-&gt;3)](n+1)-beta-D-GalNAc-(1-&gt;4)-beta-D-GlcA-(1-&gt;3)-beta-D-Gal-(1-&gt;3)-beta-D-Gal-(1-&gt;4)-beta-D-Xyl}-L-seryl-[protein] + UDP + H(+). It carries out the reaction 3-O-(beta-D-GalNAc-(1-&gt;4)-beta-D-GlcA-(1-&gt;3)-beta-D-Gal-(1-&gt;3)-beta-D-Gal-(1-&gt;4)-beta-D-Xyl)-L-seryl-[protein] + UDP-alpha-D-glucuronate = 3-O-(beta-D-GlcA-(1-&gt;3)-beta-D-GalNAc-(1-&gt;4)-beta-D-GlcA-(1-&gt;3)-beta-D-Gal-(1-&gt;3)-beta-D-Gal-(1-&gt;4)-beta-D-Xyl)-L-seryl-[protein] + UDP + H(+). The enzyme catalyses 3-O-{[beta-D-GalNAc-(1-&gt;4)-beta-D-GlcA-(1-&gt;3)](n)-beta-D-GalNAc-(1-&gt;4)-beta-D-GlcA-(1-&gt;3)-beta-D-Gal-(1-&gt;3)-beta-D-Gal-(1-&gt;4)-beta-D-Xyl}-L-seryl-[protein] + UDP-alpha-D-glucuronate = 3-O-{beta-D-GlcA-(1-&gt;3)-[beta-D-GalNAc-(1-&gt;4)-beta-D-GlcA-(1-&gt;3)](n)-beta-D-GalNAc-(1-&gt;4)-beta-D-GlcA-(1-&gt;3)-beta-D-Gal-(1-&gt;3)-beta-D-Gal-(1-&gt;4)-beta-D-Xyl}-L-seryl-[protein] + UDP + H(+). In terms of biological role, has both beta-1,3-glucuronic acid and beta-1,4-N-acetylgalactosamine transferase activity. Transfers glucuronic acid (GlcUA) from UDP-GlcUA and N-acetylgalactosamine (GalNAc) from UDP-GalNAc to the non-reducing end of the elongating chondroitin polymer. Involved in the negative control of osteogenesis likely through the modulation of NOTCH signaling. The polypeptide is Chondroitin sulfate synthase 1 (Homo sapiens (Human)).